The sequence spans 378 residues: UDP-N-acetylglucosamine--N-acetylmuramyl-(pentapeptide) pyrophosphoryl-undecaprenol N-acetylglucosamine transferase (378 aa).

UDP-N-acetyl-alpha-D-glucosamine is bound by residues 13-15 (TGG), Asn-124, Arg-165, Ser-193, and Gln-294.

It belongs to the glycosyltransferase 28 family. MurG subfamily.

Its subcellular location is the cell inner membrane. It catalyses the reaction di-trans,octa-cis-undecaprenyl diphospho-N-acetyl-alpha-D-muramoyl-L-alanyl-D-glutamyl-meso-2,6-diaminopimeloyl-D-alanyl-D-alanine + UDP-N-acetyl-alpha-D-glucosamine = di-trans,octa-cis-undecaprenyl diphospho-[N-acetyl-alpha-D-glucosaminyl-(1-&gt;4)]-N-acetyl-alpha-D-muramoyl-L-alanyl-D-glutamyl-meso-2,6-diaminopimeloyl-D-alanyl-D-alanine + UDP + H(+). It participates in cell wall biogenesis; peptidoglycan biosynthesis. Cell wall formation. Catalyzes the transfer of a GlcNAc subunit on undecaprenyl-pyrophosphoryl-MurNAc-pentapeptide (lipid intermediate I) to form undecaprenyl-pyrophosphoryl-MurNAc-(pentapeptide)GlcNAc (lipid intermediate II). This chain is UDP-N-acetylglucosamine--N-acetylmuramyl-(pentapeptide) pyrophosphoryl-undecaprenol N-acetylglucosamine transferase, found in Agrobacterium fabrum (strain C58 / ATCC 33970) (Agrobacterium tumefaciens (strain C58)).